The sequence spans 411 residues: Putative nickel insertion protein (411 aa).

It belongs to the LarC family.

In Methanothermobacter thermautotrophicus (strain ATCC 29096 / DSM 1053 / JCM 10044 / NBRC 100330 / Delta H) (Methanobacterium thermoautotrophicum), this protein is Putative nickel insertion protein.